A 468-amino-acid polypeptide reads, in one-letter code: Nuclear receptor ROR-alpha A (468 aa).

The nuclear receptor DNA-binding region spans 15–90 (IIPCKICGDK…VGMSRDAVKF (76 aa)). NR C4-type zinc fingers lie at residues 18 to 38 (CKIC…CEGC) and 54 to 73 (CPRQ…CQHC). Disordered regions lie at residues 101–129 (LYAE…PLTP) and 142–163 (HDDL…DSGV). One can recognise an NR LBD domain in the interval 217 to 455 (ELEHLAQNIS…AHFPPLYKEL (239 aa)). Residues 444–455 (VRAHFPPLYKEL) are AF-2.

Belongs to the nuclear hormone receptor family. NR1 subfamily. In terms of tissue distribution, expressed in the brain, in cerebellar-like structures, including Purkinje cells.

Its subcellular location is the nucleus. Its function is as follows. Nuclear receptor that binds DNA as a monomer to ROR response elements (RORE). Required for proper cerebellum development. In Danio rerio (Zebrafish), this protein is Nuclear receptor ROR-alpha A (roraa).